The sequence spans 224 residues: Type II restriction enzyme BstVI (224 aa).

The protein belongs to the XhoI type II restriction endonuclease family.

The catalysed reaction is Endonucleolytic cleavage of DNA to give specific double-stranded fragments with terminal 5'-phosphates.. A P subtype restriction enzyme that recognizes the double-stranded sequence 5'-CTCGAG-3' and cleaves after C-1. The chain is Type II restriction enzyme BstVI from Geobacillus stearothermophilus (Bacillus stearothermophilus).